Here is a 513-residue protein sequence, read N- to C-terminus: Beta-glucosidase 5 (513 aa).

The first 26 residues, 1–26, serve as a signal peptide directing secretion; the sequence is MAAAIAVVYLSLLLLLLHGAAPAVLG. Gln46 is an a beta-D-glucoside binding site. Catalysis depends on Glu192, which acts as the Proton donor. Cys211 and Cys220 are joined by a disulfide. N-linked (GlcNAc...) asparagine glycosylation is found at Asn224 and Asn273. Positions 336 and 405 each coordinate a beta-D-glucoside. The active-site Nucleophile is the Glu405. Residue Asn412 is glycosylated (N-linked (GlcNAc...) asparagine). A beta-D-glucoside contacts are provided by residues Trp447, 454-455, and Tyr463; that span reads EY.

It belongs to the glycosyl hydrolase 1 family.

The enzyme catalyses Hydrolysis of terminal, non-reducing beta-D-glucosyl residues with release of beta-D-glucose.. The chain is Beta-glucosidase 5 (BGLU5) from Oryza sativa subsp. japonica (Rice).